We begin with the raw amino-acid sequence, 102 residues long: Small ribosomal subunit protein uS10 (102 aa).

Residues 33–59 form a disordered region; the sequence is RMSGPIPLPTKRIRITTRKSPDGEGSA.

Belongs to the universal ribosomal protein uS10 family. As to quaternary structure, part of the 30S ribosomal subunit.

Functionally, involved in the binding of tRNA to the ribosomes. This chain is Small ribosomal subunit protein uS10, found in Pyrococcus furiosus (strain ATCC 43587 / DSM 3638 / JCM 8422 / Vc1).